Here is a 447-residue protein sequence, read N- to C-terminus: UDP-N-acetylglucosamine 1-carboxyvinyltransferase (447 aa).

27–28 contacts phosphoenolpyruvate; that stretch reads KN. A UDP-N-acetyl-alpha-D-glucosamine-binding site is contributed by Arg97. Cys121 serves as the catalytic Proton donor. A 2-(S-cysteinyl)pyruvic acid O-phosphothioketal modification is found at Cys121. UDP-N-acetyl-alpha-D-glucosamine-binding positions include 126–130, Asp314, and Val336; that span reads RPVDL.

This sequence belongs to the EPSP synthase family. MurA subfamily.

It localises to the cytoplasm. The enzyme catalyses phosphoenolpyruvate + UDP-N-acetyl-alpha-D-glucosamine = UDP-N-acetyl-3-O-(1-carboxyvinyl)-alpha-D-glucosamine + phosphate. It participates in cell wall biogenesis; peptidoglycan biosynthesis. Cell wall formation. Adds enolpyruvyl to UDP-N-acetylglucosamine. The polypeptide is UDP-N-acetylglucosamine 1-carboxyvinyltransferase (Trichormus variabilis (strain ATCC 29413 / PCC 7937) (Anabaena variabilis)).